We begin with the raw amino-acid sequence, 439 residues long: FAD-linked oxidoreductase phmC (439 aa).

A signal peptide spans 1 to 19; that stretch reads MLSSILLTIFCAFLSSTGA. N-linked (GlcNAc...) asparagine glycans are attached at residues Asn-29 and Asn-84. The 184-residue stretch at 89–272 folds into the FAD-binding PCMH-type domain; it reads QGSVPSYYIQ…LSTTTRVEPK (184 aa). 2 N-linked (GlcNAc...) asparagine glycosylation sites follow: Asn-285 and Asn-300.

The protein belongs to the oxygen-dependent FAD-linked oxidoreductase family. The cofactor is FAD.

It functions in the pathway mycotoxin biosynthesis. Functionally, FAD-linked oxidoreductase; part of the gene cluster that mediates the biosynthesis of the mycotoxins phomacins, leucine-derived cytochalasans with potent actin polymerization-inhibitory activities and monocot-specific antigerminative activities. The first step in the pathway is catalyzed by the hybrid PKS-NRPS phmA, assisted by the enoyl reductase phmE, that are responsible for fusion of the leucine precursor and the polyketide backbone to produce a 2-pyrrolidone intermediate. The polyketide synthase module (PKS) of phmA is responsible for the synthesis of the polyketide backbone and the downstream nonribosomal peptide synthetase (NRPS) amidates the carboxyl end of the polyketide with the leucine precursor. Because phmA lacks a designated enoylreductase (ER) domain, the required activity is provided the enoyl reductase phmE. Reduction by the hydrolyase phmG, followed by dehydration and intra-molecular Diels-Alder cyclization by the Diels-Alderase phmD then yield the required isoindolone-fused macrocycle. A number of oxidative steps catalyzed by the tailoring cytochrome P450 monooxygenase phmB, the FAD-linked oxidoreductase phmC and the short-chain dehydrogenase/reductase phmF, are further required to afford the final products, phomacin D and phomacin E. This is FAD-linked oxidoreductase phmC from Phaeosphaeria nodorum (strain SN15 / ATCC MYA-4574 / FGSC 10173) (Glume blotch fungus).